Consider the following 557-residue polypeptide: MALSTFKREHIKKNLRNDEYDLVIIGGGITGAGIALDASERGMKVALVEMQDFAQGTSSRSTKLVHGGLRYLKQFQIGVVAETGKERAIVYENGPHVTTPEWMLLPMHKGGTFGKFSTSIGLGMYDRLAGVKKSERKKMLSKKETLAKEPLVKKEGLKGGGYYVEYRTDDARLTIEVMKRAAEKGAEIINYTKSEHFTYDKNQQVNGVKVIDKLTNENYTIKAKKVVNAAGPWVDDVRSGDYARNNKKLRLTKGVHVVIDQSKFPLGQAVYFDTEKDGRMIFAIPREGKAYVGTTDTFYDNIKSSPLTTQEDRDYLIDAINYMFPSVNVTDEDIESTWAGIRPLIYEEGKDPSEISRKDEIWEGKSGLLTIAGGKLTGYRHMAQDIVDLVSKRLKKDYGLTFSPCNTKGLAISGGDVGGSKNFDAFVEQKVDVAKGFGIDEDVARRLASKYGSNVDELFNIAQTSQYHDSKLPLEIYVELVYSIQQEMVYKPNDFLVRRSGKMYFNIKDVLDYKDSIIDIMADMLDYSPAQIEAYTEEVEQAIKEAQHGNNQPAVKE.

Asp21 to Glu49 contacts FAD.

It belongs to the FAD-dependent glycerol-3-phosphate dehydrogenase family. The cofactor is FAD.

It is found in the cytoplasm. It catalyses the reaction a quinone + sn-glycerol 3-phosphate = dihydroxyacetone phosphate + a quinol. The protein operates within polyol metabolism; glycerol degradation via glycerol kinase pathway; glycerone phosphate from sn-glycerol 3-phosphate (aerobic route): step 1/1. The chain is Aerobic glycerol-3-phosphate dehydrogenase (glpD) from Staphylococcus aureus (strain bovine RF122 / ET3-1).